Consider the following 215-residue polypeptide: MFNLPLTSVFVIFLFALSPIYGAFEYMQLVLQWPTAFCHTTPCKNIPSNFTIHGLWPDNVSTTLNFCGKEDDYNIIMDGPEKNGLYVRWPDLIREKADCMKTQNFWRREYIKHGTCCSEIYNQVQYFRLAMALKDKFDLLTSLKNHGIIRGYKYTVQKINNTIKTVTKGYPNLSCTKGQELWFVGICFDSTAKNVIDCPNPKTCKTASNQGIMFP.

The signal sequence occupies residues 1–22 (MFNLPLTSVFVIFLFALSPIYG). RNA is bound at residue Q32. C38 and C43 are oxidised to a cystine. N-linked (GlcNAc...) asparagine glycosylation is present at N49. H53 is an RNA binding site. The active-site Proton donor is H53. N59 carries N-linked (GlcNAc...) asparagine glycosylation. The cysteines at positions 67 and 116 are disulfide-linked. RNA-binding positions include 91-92 (DL), R94, F105, 108-109 (RE), and 112-113 (KH). E109 is a catalytic residue. H113 (proton acceptor) is an active-site residue. 2 N-linked (GlcNAc...) asparagine glycosylation sites follow: N160 and N172. Cystine bridges form between C175-C204 and C187-C198.

It belongs to the RNase T2 family.

It localises to the secreted. The protein localises to the extracellular space. The catalysed reaction is a ribonucleotidyl-ribonucleotide-RNA + H2O = a 3'-end 3'-phospho-ribonucleotide-RNA + a 5'-end dephospho-ribonucleoside-RNA + H(+). Self-incompatibility (SI) is the inherited ability of a flowering plant to prevent self-fertilization by discriminating between self and non-self pollen during pollination. In many species of the Solanaceae, self-incompatibility is controlled by the single, multiallelic locus S. This stylar glycoprotein is associated with expression of self-incompatibility in potato. This is Ribonuclease S-6 from Nicotiana alata (Winged tobacco).